The following is a 125-amino-acid chain: Glycine cleavage system H protein (125 aa).

In terms of domain architecture, Lipoyl-binding spans 23-105; that stretch reads VSTVGITEHA…FEGGWLFKVR (83 aa). Lys64 bears the N6-lipoyllysine mark.

The protein belongs to the GcvH family. The glycine cleavage system is composed of four proteins: P, T, L and H. It depends on (R)-lipoate as a cofactor.

In terms of biological role, the glycine cleavage system catalyzes the degradation of glycine. The H protein shuttles the methylamine group of glycine from the P protein to the T protein. The polypeptide is Glycine cleavage system H protein (Streptomyces avermitilis (strain ATCC 31267 / DSM 46492 / JCM 5070 / NBRC 14893 / NCIMB 12804 / NRRL 8165 / MA-4680)).